Consider the following 270-residue polypeptide: Formamidopyrimidine-DNA glycosylase (270 aa).

P2 functions as the Schiff-base intermediate with DNA in the catalytic mechanism. The Proton donor role is filled by E3. K58 acts as the Proton donor; for beta-elimination activity in catalysis. The DNA site is built by H90 and R109. An FPG-type zinc finger spans residues 237-270 (KVYGKEGEQCECGHTIERYTLGGRSTFLCSSCQK). The active-site Proton donor; for delta-elimination activity is R260.

The protein belongs to the FPG family. Monomer. It depends on Zn(2+) as a cofactor.

The catalysed reaction is Hydrolysis of DNA containing ring-opened 7-methylguanine residues, releasing 2,6-diamino-4-hydroxy-5-(N-methyl)formamidopyrimidine.. It catalyses the reaction 2'-deoxyribonucleotide-(2'-deoxyribose 5'-phosphate)-2'-deoxyribonucleotide-DNA = a 3'-end 2'-deoxyribonucleotide-(2,3-dehydro-2,3-deoxyribose 5'-phosphate)-DNA + a 5'-end 5'-phospho-2'-deoxyribonucleoside-DNA + H(+). In terms of biological role, involved in base excision repair of DNA damaged by oxidation or by mutagenic agents. Acts as a DNA glycosylase that recognizes and removes damaged bases. Has a preference for oxidized purines, such as 7,8-dihydro-8-oxoguanine (8-oxoG). Has AP (apurinic/apyrimidinic) lyase activity and introduces nicks in the DNA strand. Cleaves the DNA backbone by beta-delta elimination to generate a single-strand break at the site of the removed base with both 3'- and 5'-phosphates. This Zymomonas mobilis subsp. mobilis (strain ATCC 31821 / ZM4 / CP4) protein is Formamidopyrimidine-DNA glycosylase (mutM).